The sequence spans 436 residues: MRNVGIISLGCPKNSVDSEKMLALLKEKGYNIVNDEKKADVIIINTCAFIEDAKKESIEYIIQMGELKKKRLKYLIATGCLSERYNKELIKELPELDAVIGTGDFTQIVDVIEEVKKGKKVLKYGHPDLLNDEGIPRILTTPPYYAYLKIAEGCSNACSFCIIPKLRGKYKSRKMENIIEEAQELARKGVKELIIIAQDTTKYGIDLYKKLMLPQLLRELSKIEELKWIRLLYAYPDSVTDELIEEIKNNQKIVKYIDIPLQHSSESVLKRMNRGTTRRKIEEVISKLRSIPGMVMRTTFMVGFPGETEEEFEDLKNFIKEKRFERVGVFTYSREEGTKSYYMKPQIRKKVKLKRQEELMEIQKQISYEFNMSKIGTKLEVLIEGFEDGVYYGRSYMDAPEIDGLVYVRSDKKLFPGDFVTVTVVDAFEYDLVGEY.

One can recognise an MTTase N-terminal domain in the interval 2-117 (RNVGIISLGC…IVDVIEEVKK (116 aa)). Positions 11, 47, 80, 154, 158, and 161 each coordinate [4Fe-4S] cluster. One can recognise a Radical SAM core domain in the interval 140 to 369 (TTPPYYAYLK…MEIQKQISYE (230 aa)). The TRAM domain occupies 372–436 (MSKIGTKLEV…AFEYDLVGEY (65 aa)).

This sequence belongs to the methylthiotransferase family. RimO subfamily. The cofactor is [4Fe-4S] cluster.

It is found in the cytoplasm. It catalyses the reaction L-aspartate(89)-[ribosomal protein uS12]-hydrogen + (sulfur carrier)-SH + AH2 + 2 S-adenosyl-L-methionine = 3-methylsulfanyl-L-aspartate(89)-[ribosomal protein uS12]-hydrogen + (sulfur carrier)-H + 5'-deoxyadenosine + L-methionine + A + S-adenosyl-L-homocysteine + 2 H(+). Functionally, catalyzes the methylthiolation of an aspartic acid residue of ribosomal protein uS12. This chain is Ribosomal protein uS12 methylthiotransferase RimO, found in Caldanaerobacter subterraneus subsp. tengcongensis (strain DSM 15242 / JCM 11007 / NBRC 100824 / MB4) (Thermoanaerobacter tengcongensis).